Reading from the N-terminus, the 536-residue chain is MTFSEILDRVGSMGPFQYLHVTLLALPVLGIANHNLLQIFTATTPVHHCRPPPNASIGPWVLPLDPNGKPEKCLRFVHLPNASLPNDTQRATEPCLDGWIYNSTRDTIVIEWDLVCSSNKLKEMAQSIFMAGILVGGPVIGELSDRFGRKPILTWSYLMLAASGSGAAFSPSLPVYMIFRFLCGCSISGISLSTVILNVEWVPTSMRAISSTSIGYCYTIGQFILSGLAYAIPQWRWLQLTSSAPFFIFSLLSWWVPESIRWLVLSGKYSKALKTLQRVATFNGKKEEGKKLTIEELKFNLQKDITSAKVKYGLSDLFRVSILRRVTFCLSLAWFSTGFAYYSLAMGVEEFGVNIYILQIIFGGVDIPAKFITILSLSYLGRRITQSFLLLLAGGAILALIFVPSEMQLLRTALAVFGKGCLSGSFSCLFLYTSELYPTVLRQTGMGISNVWARVGSMIAPLVKITGELQPFIPNVIFGTTALLGGSAAFFLLETLNRPLPETIEDIQNWHKQVQKTKQESEAEKASQIIPLKTGG.

The Cytoplasmic segment spans residues 1-11 (MTFSEILDRVG). Residue Ser4 is modified to Phosphoserine. Residues 12-32 (SMGPFQYLHVTLLALPVLGIA) form a helical membrane-spanning segment. Residues 33–123 (NHNLLQIFTA…LVCSSNKLKE (91 aa)) lie on the Extracellular side of the membrane. Residues Asn81 and Asn86 are each glycosylated (N-linked (GlcNAc...) asparagine). Residues 124–144 (MAQSIFMAGILVGGPVIGELS) form a helical membrane-spanning segment. Over 145–158 (DRFGRKPILTWSYL) the chain is Cytoplasmic. A helical transmembrane segment spans residues 159-179 (MLAASGSGAAFSPSLPVYMIF). Residue Arg180 is a topological domain, extracellular. The chain crosses the membrane as a helical span at residues 181 to 201 (FLCGCSISGISLSTVILNVEW). At 202–212 (VPTSMRAISST) the chain is on the cytoplasmic side. A helical transmembrane segment spans residues 213–233 (SIGYCYTIGQFILSGLAYAIP). The Extracellular portion of the chain corresponds to 234–236 (QWR). Residues 237-257 (WLQLTSSAPFFIFSLLSWWVP) form a helical membrane-spanning segment. Residues 258–327 (ESIRWLVLSG…FRVSILRRVT (70 aa)) lie on the Cytoplasmic side of the membrane. The helical transmembrane segment at 328–348 (FCLSLAWFSTGFAYYSLAMGV) threads the bilayer. At 349 to 354 (EEFGVN) the chain is on the extracellular side. A helical transmembrane segment spans residues 355 to 375 (IYILQIIFGGVDIPAKFITIL). Topologically, residues 376 to 383 (SLSYLGRR) are cytoplasmic. The chain crosses the membrane as a helical span at residues 384 to 404 (ITQSFLLLLAGGAILALIFVP). Residues 405–411 (SEMQLLR) lie on the Extracellular side of the membrane. Residues 412 to 432 (TALAVFGKGCLSGSFSCLFLY) traverse the membrane as a helical segment. At 433–471 (TSELYPTVLRQTGMGISNVWARVGSMIAPLVKITGELQP) the chain is on the cytoplasmic side. Residues 472-492 (FIPNVIFGTTALLGGSAAFFL) traverse the membrane as a helical segment. Residues 493 to 536 (LETLNRPLPETIEDIQNWHKQVQKTKQESEAEKASQIIPLKTGG) lie on the Extracellular side of the membrane. The segment at 515–536 (QKTKQESEAEKASQIIPLKTGG) is disordered.

Belongs to the major facilitator (TC 2.A.1) superfamily. Organic cation transporter (TC 2.A.1.19) family. In terms of tissue distribution, expressed in the liver, brain, kidney, choroid plexus and weakly in the eye. Moderately expressed (at protein level) in the brain capillary endothelial cells (BCEC).

The protein localises to the basolateral cell membrane. The enzyme catalyses estrone 3-sulfate(out) + glutarate(in) = estrone 3-sulfate(in) + glutarate(out). It catalyses the reaction estrone 3-sulfate(in) + 2-oxoglutarate(out) = estrone 3-sulfate(out) + 2-oxoglutarate(in). The catalysed reaction is glutarate(in) + 2-oxoglutarate(out) = glutarate(out) + 2-oxoglutarate(in). It carries out the reaction urate(in) + 2-oxoglutarate(out) = urate(out) + 2-oxoglutarate(in). The enzyme catalyses taurocholate(out) + glutarate(in) = taurocholate(in) + glutarate(out). It catalyses the reaction dehydroepiandrosterone 3-sulfate(out) + glutarate(in) = dehydroepiandrosterone 3-sulfate(in) + glutarate(out). The catalysed reaction is prostaglandin F2alpha(out) + glutarate(in) = prostaglandin F2alpha(in) + glutarate(out). It carries out the reaction prostaglandin F2alpha(out) + 2-oxoglutarate(in) = prostaglandin F2alpha(in) + 2-oxoglutarate(out). The enzyme catalyses (R)-carnitine(out) + 2-oxoglutarate(in) = (R)-carnitine(in) + 2-oxoglutarate(out). It catalyses the reaction glutarate(in) + (R)-carnitine(out) = glutarate(out) + (R)-carnitine(in). The catalysed reaction is prostaglandin E2(out) + 2-oxoglutarate(in) = prostaglandin E2(in) + 2-oxoglutarate(out). It carries out the reaction prostaglandin E2(out) + glutarate(in) = prostaglandin E2(in) + glutarate(out). The enzyme catalyses urate(in) + glutarate(out) = urate(out) + glutarate(in). It catalyses the reaction taurocholate(out) + 2-oxoglutarate(in) = taurocholate(in) + 2-oxoglutarate(out). The catalysed reaction is dehydroepiandrosterone 3-sulfate(out) + 2-oxoglutarate(in) = dehydroepiandrosterone 3-sulfate(in) + 2-oxoglutarate(out). It carries out the reaction kynurenate(out) + a dicarboxylate(in) = kynurenate(in) + a dicarboxylate(out). The enzyme catalyses (indol-3-yl)acetate(out) + a dicarboxylate(in) = (indol-3-yl)acetate(in) + a dicarboxylate(out). It catalyses the reaction indoxyl sulfate(out) + a dicarboxylate(in) = indoxyl sulfate(in) + a dicarboxylate(out). The catalysed reaction is N-benzoylglycine(out) + a dicarboxylate(in) = N-benzoylglycine(in) + a dicarboxylate(out). It carries out the reaction 3-carboxy-4-methyl-5-propyl-2-furanpropanoate(out) + a dicarboxylate(in) = 3-carboxy-4-methyl-5-propyl-2-furanpropanoate(in) + a dicarboxylate(out). The enzyme catalyses (6R)-L-erythro-5,6,7,8-tetrahydrobiopterin(out) + a dicarboxylate(in) = (6R)-L-erythro-5,6,7,8-tetrahydrobiopterin(in) + a dicarboxylate(out). It catalyses the reaction L-erythro-7,8-dihydrobiopterin(out) + a dicarboxylate(in) = L-erythro-7,8-dihydrobiopterin(in) + a dicarboxylate(out). The catalysed reaction is L-sepiapterin(out) + a dicarboxylate(in) = L-sepiapterin(in) + a dicarboxylate(out). In terms of biological role, functions as an organic anion/dicarboxylate exchanger that couples organic anion uptake indirectly to the sodium gradient. Transports organic anions such as estrone 3-sulfate (E1S) and urate in exchange for dicarboxylates such as glutarate or ketoglutarate (2-oxoglutarate). Plays an important role in the excretion of endogenous and exogenous organic anions, especially from the kidney and the brain. E1S transport is pH- and chloride-dependent and may also involve E1S/cGMP exchange. Responsible for the transport of prostaglandin E2 (PGE2) and prostaglandin F2(alpha) (PGF2(alpha)) in the basolateral side of the renal tubule. Involved in the transport of neuroactive tryptophan metabolites kynurenate and xanthurenate. Functions as a biopterin transporters involved in the uptake and the secretion of coenzymes tetrahydrobiopterin (BH4), dihydrobiopterin (BH2) and sepiapterin to urine, thereby determining baseline levels of blood biopterins. May be involved in the basolateral transport of steviol, a metabolite of the popular sugar substitute stevioside. May participate in the detoxification/ renal excretion of drugs and xenobiotics, such as the histamine H(2)-receptor antagonists fexofenadine and cimetidine, the antibiotic benzylpenicillin (PCG), the anionic herbicide 2,4-dichloro-phenoxyacetate (2,4-D), the diagnostic agent p-aminohippurate (PAH), the antiviral acyclovir (ACV), and the mycotoxin ochratoxin (OTA), by transporting these exogenous organic anions across the cell membrane in exchange for dicarboxylates such as 2-oxoglutarate. Contributes to the renal uptake of potent uremic toxins (indoxyl sulfate (IS), indole acetate (IA), hippurate/N-benzoylglycine (HA) and 3-carboxy-4-methyl-5-propyl-2-furanpropionate (CMPF)), pravastatin, PCG, E1S and dehydroepiandrosterone sulfate (DHEAS), and is partly involved in the renal uptake of temocaprilat (an angiotensin-converting enzyme (ACE) inhibitor). May contribute to the release of cortisol in the adrenals. Involved in one of the detoxification systems on the choroid plexus (CP), removes substrates such as E1S or taurocholate (TC), PCG, 2,4-D and PAH, from the cerebrospinal fluid (CSF) to the blood for eventual excretion in urine and bile. Regulates the CSF concentration of histamine H(2)-receptor antagonists cimetidine and ranitidine at the CP. Also contributes to the uptake of several other organic compounds such as the prostanoids prostaglandin E(2) and prostaglandin F(2-alpha), L-carnitine, and the therapeutic drugs allopurinol, 6-mercaptopurine (6-MP) and 5-fluorouracil (5-FU). Mediates the uptake from brain of organic anions, such as E1S, PAH, and OTA. Mediates the transport of PAH, PCG, and the statins pravastatin and pitavastatin, from the cerebrum into the blood circulation across the blood-brain barrier (BBB). In summary, plays a role in the efflux of drugs and xenobiotics, helping reduce their undesired toxicological effects on the body. The chain is Organic anion transporter 3 (Slc22a8) from Rattus norvegicus (Rat).